Consider the following 430-residue polypeptide: Aspartate--tRNA(Asp/Asn) ligase (430 aa).

Glutamate 168 is a binding site for L-aspartate. Residues 190 to 193 form an aspartate region; sequence QLYK. Arginine 212 serves as a coordination point for L-aspartate. ATP is bound by residues 212–214, 220–222, and glutamate 353; these read RAE and RHL. Residues glutamate 353 and serine 356 each coordinate Mg(2+). Serine 356 and arginine 360 together coordinate L-aspartate. An ATP-binding site is contributed by 401–404; sequence GAER.

Belongs to the class-II aminoacyl-tRNA synthetase family. Type 2 subfamily. In terms of assembly, homodimer. It depends on Mg(2+) as a cofactor.

The protein localises to the cytoplasm. The catalysed reaction is tRNA(Asx) + L-aspartate + ATP = L-aspartyl-tRNA(Asx) + AMP + diphosphate. In terms of biological role, aspartyl-tRNA synthetase with relaxed tRNA specificity since it is able to aspartylate not only its cognate tRNA(Asp) but also tRNA(Asn). Reaction proceeds in two steps: L-aspartate is first activated by ATP to form Asp-AMP and then transferred to the acceptor end of tRNA(Asp/Asn). The polypeptide is Aspartate--tRNA(Asp/Asn) ligase (Archaeoglobus fulgidus (strain ATCC 49558 / DSM 4304 / JCM 9628 / NBRC 100126 / VC-16)).